Consider the following 708-residue polypeptide: ATP-dependent DNA helicase Hel308 (708 aa).

ATP is bound by residues glutamine 28 and 46–53 (TATASGKS). One can recognise a Helicase ATP-binding domain in the interval 33 to 198 (RAGIFDGRSV…WLGARLVESS (166 aa)). Residues 143-146 (DEIH) carry the DEAH box motif. The Helicase C-terminal domain occupies 231–429 (EVALAVDAVA…EPNLRAHVLG (199 aa)).

The protein belongs to the helicase family. Hel308 subfamily. In terms of assembly, monomer.

It carries out the reaction Couples ATP hydrolysis with the unwinding of duplex DNA by translocating in the 3'-5' direction.. The catalysed reaction is ATP + H2O = ADP + phosphate + H(+). In terms of biological role, DNA-dependent ATPase and 3'-5' DNA helicase that may be involved in repair of stalled replication forks. The sequence is that of ATP-dependent DNA helicase Hel308 from Pyrobaculum calidifontis (strain DSM 21063 / JCM 11548 / VA1).